The following is a 288-amino-acid chain: tRNA (guanine-N(1)-)-methyltransferase (288 aa).

Residues 82–105 form a disordered region; the sequence is ATDAVDTSDPGDSAAPDSSAPSGA. The segment covering 89 to 105 has biased composition (low complexity); the sequence is SDPGDSAAPDSSAPSGA. S-adenosyl-L-methionine-binding positions include Gly137 and 162-167; that span reads IGDYVL.

It belongs to the RNA methyltransferase TrmD family. In terms of assembly, homodimer.

It localises to the cytoplasm. The catalysed reaction is guanosine(37) in tRNA + S-adenosyl-L-methionine = N(1)-methylguanosine(37) in tRNA + S-adenosyl-L-homocysteine + H(+). Functionally, specifically methylates guanosine-37 in various tRNAs. This chain is tRNA (guanine-N(1)-)-methyltransferase, found in Bifidobacterium longum (strain DJO10A).